Consider the following 255-residue polypeptide: 1-(5-phosphoribosyl)-5-[(5-phosphoribosylamino)methylideneamino] imidazole-4-carboxamide isomerase (255 aa).

The active-site Proton acceptor is aspartate 8. Aspartate 129 (proton donor) is an active-site residue.

Belongs to the HisA/HisF family.

It is found in the cytoplasm. The enzyme catalyses 1-(5-phospho-beta-D-ribosyl)-5-[(5-phospho-beta-D-ribosylamino)methylideneamino]imidazole-4-carboxamide = 5-[(5-phospho-1-deoxy-D-ribulos-1-ylimino)methylamino]-1-(5-phospho-beta-D-ribosyl)imidazole-4-carboxamide. It functions in the pathway amino-acid biosynthesis; L-histidine biosynthesis; L-histidine from 5-phospho-alpha-D-ribose 1-diphosphate: step 4/9. This is 1-(5-phosphoribosyl)-5-[(5-phosphoribosylamino)methylideneamino] imidazole-4-carboxamide isomerase from Prochlorococcus marinus (strain MIT 9211).